The chain runs to 708 residues: Probable GTP diphosphokinase RSH3, chloroplastic (708 aa).

Disordered regions lie at residues 1–50 (MSLP…AAGG) and 109–134 (HSPVSVFQGPSSSPAASRSPPASWLA). Residues 1–58 (MSLPAISLYTSPPPGAVYSSEFDPSSRGSSPPCSTAPPSTSHRPPAAAGGLSCLFSSP) constitute a chloroplast transit peptide. 2 stretches are compositionally biased toward low complexity: residues 29-41 (SSPPCSTAPPSTS) and 118-131 (PSSSPAASRSPPAS). Residues 233–337 (YLQHCVETAV…IKLADRVHNM (105 aa)) form the HD domain.

Belongs to the RelA/SpoT family.

The protein resides in the plastid. It localises to the chloroplast. It carries out the reaction GTP + ATP = guanosine 3'-diphosphate 5'-triphosphate + AMP. In terms of biological role, probable ppGpp (guanosine 3'-diphosphate 5'-diphosphate) synthetase that may be involved in a rapid plant ppGpp-mediated response to pathogens and other stresses. This Oryza sativa subsp. japonica (Rice) protein is Probable GTP diphosphokinase RSH3, chloroplastic (RSH3).